Reading from the N-terminus, the 255-residue chain is Formate hydrogenlyase subunit 7 (255 aa).

[4Fe-4S] cluster is bound by residues C45, C51, C115, and C145.

The protein belongs to the complex I 20 kDa subunit family. FHL comprises of a formate dehydrogenase, unidentified electron carriers and a hydrogenase (isoenzyme 3). In this non-energy conserving pathway molecular hydrogen and carbodioxide from formate are released. [4Fe-4S] cluster serves as cofactor.

This Escherichia coli (strain K12) protein is Formate hydrogenlyase subunit 7 (hycG).